The sequence spans 471 residues: Cell division protein FtsP (471 aa).

Residues 1–27 constitute a signal peptide (tat-type signal); it reads MSLSRRSFLQASGVALAAGALPLKAEA. In terms of domain architecture, Plastocyanin-like spans 229-288; sequence VRLRLLNASNARRYELSMTDNRAFHVVASDLGFLPAPMTVKRLSLGPGERREVLVDMSQG.

This sequence belongs to the FtsP family. In terms of processing, predicted to be exported by the Tat system. The position of the signal peptide cleavage has not been experimentally proven.

The protein resides in the periplasm. Functionally, cell division protein that is required for growth during stress conditions. May be involved in protecting or stabilizing the divisomal assembly under conditions of stress. In Rahnella sp. (strain Y9602), this protein is Cell division protein FtsP.